Consider the following 121-residue polypeptide: Small ribosomal subunit protein uS11 (121 aa).

The protein belongs to the universal ribosomal protein uS11 family. Part of the 30S ribosomal subunit. Interacts with proteins S7 and S18. Binds to IF-3.

Functionally, located on the platform of the 30S subunit, it bridges several disparate RNA helices of the 16S rRNA. Forms part of the Shine-Dalgarno cleft in the 70S ribosome. The protein is Small ribosomal subunit protein uS11 of Mycoplasma pneumoniae (strain ATCC 29342 / M129 / Subtype 1) (Mycoplasmoides pneumoniae).